Consider the following 149-residue polypeptide: Nucleoside diphosphate kinase (149 aa).

Residues Lys9, Phe57, Arg85, Thr91, Arg102, and Asn112 each contribute to the ATP site. Catalysis depends on His115, which acts as the Pros-phosphohistidine intermediate.

The protein belongs to the NDK family. In terms of assembly, homotetramer. Requires Mg(2+) as cofactor.

The protein localises to the cytoplasm. The catalysed reaction is dZDP + ATP = dZTP + ADP. It carries out the reaction a 2'-deoxyribonucleoside 5'-diphosphate + ATP = a 2'-deoxyribonucleoside 5'-triphosphate + ADP. The enzyme catalyses a ribonucleoside 5'-diphosphate + ATP = a ribonucleoside 5'-triphosphate + ADP. Its pathway is purine metabolism. In terms of biological role, major role in the synthesis of nucleoside triphosphates other than ATP. The ATP gamma phosphate is transferred to the NDP beta phosphate via a ping-pong mechanism, using a phosphorylated active-site intermediate. Functionally, (Microbial infection) Catalyzes the phosphorylation of dZDP to dZTP, when the bacterium is infected by a phage that produces the substrate for the synthesis of dZTP (2- amino-2'-deoxyadenosine 5'-triphosphate), which is then used by the phage as a DNA polymerase substrate. In Synechococcus sp. (strain JA-3-3Ab) (Cyanobacteria bacterium Yellowstone A-Prime), this protein is Nucleoside diphosphate kinase.